A 102-amino-acid polypeptide reads, in one-letter code: Large ribosomal subunit protein bL21 (102 aa).

Positions 79 to 91 (RKDSKRKKGHRQP) are enriched in basic residues. The interval 79–102 (RKDSKRKKGHRQPYTKLTIDKINA) is disordered.

The protein belongs to the bacterial ribosomal protein bL21 family. As to quaternary structure, part of the 50S ribosomal subunit. Contacts protein L20.

Functionally, this protein binds to 23S rRNA in the presence of protein L20. This is Large ribosomal subunit protein bL21 from Staphylococcus epidermidis (strain ATCC 35984 / DSM 28319 / BCRC 17069 / CCUG 31568 / BM 3577 / RP62A).